The primary structure comprises 452 residues: Cytoplasmic tRNA 2-thiolation protein 2 (452 aa).

The protein belongs to the CTU2/NCS2 family.

It is found in the cytoplasm. It functions in the pathway tRNA modification; 5-methoxycarbonylmethyl-2-thiouridine-tRNA biosynthesis. Functionally, plays a central role in 2-thiolation of mcm(5)S(2)U at tRNA wobble positions of tRNA(Lys), tRNA(Glu) and tRNA(Gln). May act by forming a heterodimer with NCS6 that ligates sulfur from thiocarboxylated URM1 onto the uridine of tRNAs at wobble position. Prior mcm(5) tRNA modification by the elongator complex is required for 2-thiolation. May also be involved in protein urmylation. This chain is Cytoplasmic tRNA 2-thiolation protein 2, found in Candida albicans (strain SC5314 / ATCC MYA-2876) (Yeast).